Here is a 156-residue protein sequence, read N- to C-terminus: MALEKSLALLPLLVLVLLVLGWVQPSLGKESRAKKFQRQHMDSDGSLSSNPTYCNNMMRRRNMTQGWCKPVNTFVHEPLVDVQDVCFQENVTCKNGQANCYKSSSSMHITDCRLTSGSRYPNCAYQTSQKERHIIVACEGNPYVPVHFDASVEDST.

A signal peptide spans 1-28 (MALEKSLALLPLLVLVLLVLGWVQPSLG). 2 residues coordinate substrate: Lys35 and Arg38. Residue His40 is the Proton acceptor of the active site. 4 disulfide bridges follow: Cys54/Cys112, Cys68/Cys123, Cys86/Cys138, and Cys93/Cys100. A glycan (N-linked (GlcNAc...) asparagine) is linked at Asn62. Residue 69–73 (KPVNT) coordinates substrate. Residue Asn90 is glycosylated (N-linked (GlcNAc...) asparagine). Substrate is bound by residues Lys94 and Arg113. Residue His147 is the Proton donor of the active site.

It belongs to the pancreatic ribonuclease family. As to quaternary structure, monomer. Interacts with and forms tight 1:1 complexes with RNH1. Dimerization of two such complexes may occur. Interaction with RNH1 inhibits this protein.

Its subcellular location is the secreted. It carries out the reaction an [RNA] containing cytidine + H2O = an [RNA]-3'-cytidine-3'-phosphate + a 5'-hydroxy-ribonucleotide-3'-[RNA].. The enzyme catalyses an [RNA] containing uridine + H2O = an [RNA]-3'-uridine-3'-phosphate + a 5'-hydroxy-ribonucleotide-3'-[RNA].. Its function is as follows. Endonuclease that catalyzes the cleavage of RNA on the 3' side of pyrimidine nucleotides. Acts on single-stranded and double-stranded RNA. This chain is Ribonuclease pancreatic (RNASE1), found in Lagothrix lagotricha (Brown woolly monkey).